The primary structure comprises 946 residues: Bifunctional glutamine synthetase adenylyltransferase/adenylyl-removing enzyme (946 aa).

The segment at 1-440 (MKPLSSPLQQ…VFNELIGDDE (440 aa)) is adenylyl removase. An adenylyl transferase region spans residues 449–946 (SEQWRELWQD…ASWQKWLVEE (498 aa)).

Belongs to the GlnE family. Mg(2+) is required as a cofactor.

The enzyme catalyses [glutamine synthetase]-O(4)-(5'-adenylyl)-L-tyrosine + phosphate = [glutamine synthetase]-L-tyrosine + ADP. It carries out the reaction [glutamine synthetase]-L-tyrosine + ATP = [glutamine synthetase]-O(4)-(5'-adenylyl)-L-tyrosine + diphosphate. In terms of biological role, involved in the regulation of glutamine synthetase GlnA, a key enzyme in the process to assimilate ammonia. When cellular nitrogen levels are high, the C-terminal adenylyl transferase (AT) inactivates GlnA by covalent transfer of an adenylyl group from ATP to specific tyrosine residue of GlnA, thus reducing its activity. Conversely, when nitrogen levels are low, the N-terminal adenylyl removase (AR) activates GlnA by removing the adenylyl group by phosphorolysis, increasing its activity. The regulatory region of GlnE binds the signal transduction protein PII (GlnB) which indicates the nitrogen status of the cell. The protein is Bifunctional glutamine synthetase adenylyltransferase/adenylyl-removing enzyme of Escherichia coli O7:K1 (strain IAI39 / ExPEC).